Consider the following 404-residue polypeptide: Cysteine desulfurase IscS (404 aa).

Pyridoxal 5'-phosphate is bound by residues 73–74 (AT), Asn153, Gln181, and 201–203 (SAH). Lys204 carries the N6-(pyridoxal phosphate)lysine modification. Residue Thr241 participates in pyridoxal 5'-phosphate binding. Cys327 serves as the catalytic Cysteine persulfide intermediate. A [2Fe-2S] cluster-binding site is contributed by Cys327.

It belongs to the class-V pyridoxal-phosphate-dependent aminotransferase family. NifS/IscS subfamily. In terms of assembly, homodimer. Forms a heterotetramer with IscU, interacts with other sulfur acceptors. The cofactor is pyridoxal 5'-phosphate.

It is found in the cytoplasm. It carries out the reaction (sulfur carrier)-H + L-cysteine = (sulfur carrier)-SH + L-alanine. The protein operates within cofactor biosynthesis; iron-sulfur cluster biosynthesis. Functionally, master enzyme that delivers sulfur to a number of partners involved in Fe-S cluster assembly, tRNA modification or cofactor biosynthesis. Catalyzes the removal of elemental sulfur atoms from cysteine to produce alanine. Functions as a sulfur delivery protein for Fe-S cluster synthesis onto IscU, an Fe-S scaffold assembly protein, as well as other S acceptor proteins. The polypeptide is Cysteine desulfurase IscS (Anaeromyxobacter sp. (strain Fw109-5)).